We begin with the raw amino-acid sequence, 79 residues long: Major outer membrane lipoprotein Lpp 2 (79 aa).

Positions 1-21 are cleaved as a signal peptide; the sequence is MNRTNQLILGAVVLGSTLLAG. Cys-22 carries the N-palmitoyl cysteine lipid modification. Cys-22 carries S-diacylglycerol cysteine lipidation. Repeats lie at residues 25-35 and 39-49; these read NAKIDQLSSDV and SAKVEQLSNDV. Residues 28 to 69 are a coiled coil; it reads IDQLSSDVQTLSAKVEQLSNDVNAMRSDVQAAKDDAARANQR. Lys-79 bears the N6-murein peptidoglycan lysine mark.

The protein belongs to the Lpp family. In terms of assembly, homotrimer.

Its subcellular location is the cell outer membrane. The protein localises to the secreted. It localises to the cell wall. Its function is as follows. Plays an important role in virulence. A highly abundant outer membrane lipoprotein that controls the distance between the inner and outer membranes. The only protein known to be covalently linked to the peptidoglycan network (PGN). Also non-covalently binds the PGN. The link between the cell outer membrane and PGN contributes to maintenance of the structural and functional integrity of the cell envelope, and maintains the correct distance between the PGN and the outer membrane. This Salmonella typhimurium (strain LT2 / SGSC1412 / ATCC 700720) protein is Major outer membrane lipoprotein Lpp 2.